Here is a 243-residue protein sequence, read N- to C-terminus: Nuclear protein UL4 homolog (243 aa).

The interval 193–226 is disordered; it reads RPDDQTTPTPTPHQYTSQRRQPETNCPSPQPAFF. Over residues 205-219 the composition is skewed to polar residues; the sequence is HQYTSQRRQPETNCP.

It belongs to the alphaherpesvirinae HHV-1 UL4 family.

It is found in the host nucleus. The polypeptide is Nuclear protein UL4 homolog (Varicella-zoster virus (strain Oka vaccine) (HHV-3)).